Here is a 324-residue protein sequence, read N- to C-terminus: Olfactory receptor 7G2 (324 aa).

At 1-25 (MEARNQTAISKFLLLGLIEDPELQP) the chain is on the extracellular side. An N-linked (GlcNAc...) asparagine glycan is attached at Asn5. A helical membrane pass occupies residues 26–46 (VLFSLFLSMYLVTILGNLLIL). At 47-54 (LAVISDSH) the chain is on the cytoplasmic side. A helical transmembrane segment spans residues 55 to 75 (LHTPMYFFLSNLSFLDICLST). Residues 76–99 (TTIPKMLVNIQAQNRSITYSGCLT) lie on the Extracellular side of the membrane. Residue Asn89 is glycosylated (N-linked (GlcNAc...) asparagine). A disulfide bridge connects residues Cys97 and Cys189. The chain crosses the membrane as a helical span at residues 100 to 120 (QICFVLFFAGLENCLLAAMAY). Residues 121–139 (DRYVAICHPLRYTVIMNPR) are Cytoplasmic-facing. The chain crosses the membrane as a helical span at residues 140–160 (LCGLLILLSLLTSVVNALLLS). The Extracellular segment spans residues 161-197 (LMVLRLSFCTDLEIPLFFCELAQVIQLTCSDTLINNI). Residues 198–217 (LIYFAACIFGGVPLSGIILS) form a helical membrane-spanning segment. The Cytoplasmic segment spans residues 218 to 237 (YTQITSCVLRMPSASGKHKA). The chain crosses the membrane as a helical span at residues 238 to 258 (VSTCGSHLSIVLLFYGAGLGV). Topologically, residues 259 to 271 (YISSVVTDSPRKT) are extracellular. Residues 272–292 (AVASVMYSVFPQMVNPFIYSL) traverse the membrane as a helical segment. The Cytoplasmic segment spans residues 293 to 324 (RNKDMKGTLRKFIGRIPSLLWCAICFGFRFLE).

The protein belongs to the G-protein coupled receptor 1 family.

Its subcellular location is the cell membrane. Odorant receptor. The polypeptide is Olfactory receptor 7G2 (OR7G2) (Homo sapiens (Human)).